Consider the following 251-residue polypeptide: uncharacterized protein (251 aa).

Residues methionine 1–proline 22 form a disordered region.

This is an uncharacterized protein from Homo sapiens (Human).